The chain runs to 166 residues: Chemoreceptor glutamine deamidase CheD (166 aa).

It belongs to the CheD family. In terms of assembly, forms a complex with CheC.

It carries out the reaction L-glutaminyl-[protein] + H2O = L-glutamyl-[protein] + NH4(+). Functionally, deamidates glutamine residues to glutamate on methyl-accepting chemotaxis receptors (MCPs). CheD-mediated MCP deamidation is required for productive communication of the conformational signals of the chemoreceptors to the CheA kinase. The protein is Chemoreceptor glutamine deamidase CheD of Bacillus velezensis (strain DSM 23117 / BGSC 10A6 / LMG 26770 / FZB42) (Bacillus amyloliquefaciens subsp. plantarum).